The sequence spans 361 residues: S-adenosylmethionine:tRNA ribosyltransferase-isomerase (361 aa).

The protein belongs to the QueA family. As to quaternary structure, monomer.

The protein localises to the cytoplasm. The catalysed reaction is 7-aminomethyl-7-carbaguanosine(34) in tRNA + S-adenosyl-L-methionine = epoxyqueuosine(34) in tRNA + adenine + L-methionine + 2 H(+). It participates in tRNA modification; tRNA-queuosine biosynthesis. Its function is as follows. Transfers and isomerizes the ribose moiety from AdoMet to the 7-aminomethyl group of 7-deazaguanine (preQ1-tRNA) to give epoxyqueuosine (oQ-tRNA). This chain is S-adenosylmethionine:tRNA ribosyltransferase-isomerase, found in Rhizobium johnstonii (strain DSM 114642 / LMG 32736 / 3841) (Rhizobium leguminosarum bv. viciae).